The sequence spans 187 residues: Threonylcarbamoyl-AMP synthase (187 aa).

Residues 4–187 (TLTLSEAVTA…DARSGHILRL (184 aa)) form the YrdC-like domain.

This sequence belongs to the SUA5 family. TsaC subfamily.

It is found in the cytoplasm. It catalyses the reaction L-threonine + hydrogencarbonate + ATP = L-threonylcarbamoyladenylate + diphosphate + H2O. In terms of biological role, required for the formation of a threonylcarbamoyl group on adenosine at position 37 (t(6)A37) in tRNAs that read codons beginning with adenine. Catalyzes the conversion of L-threonine, HCO(3)(-)/CO(2) and ATP to give threonylcarbamoyl-AMP (TC-AMP) as the acyladenylate intermediate, with the release of diphosphate. The sequence is that of Threonylcarbamoyl-AMP synthase from Xylella fastidiosa (strain M12).